We begin with the raw amino-acid sequence, 138 residues long: Translation initiation factor 2 subunit beta (138 aa).

The protein belongs to the eIF-2-beta/eIF-5 family. In terms of assembly, heterotrimer composed of an alpha, a beta and a gamma chain.

EIF-2 functions in the early steps of protein synthesis by forming a ternary complex with GTP and initiator tRNA. This is Translation initiation factor 2 subunit beta from Methanococcus maripaludis (strain DSM 14266 / JCM 13030 / NBRC 101832 / S2 / LL).